Here is a 537-residue protein sequence, read N- to C-terminus: Glucose-6-phosphate isomerase (537 aa).

Glutamate 355 serves as the catalytic Proton donor. Catalysis depends on residues histidine 386 and lysine 501.

It belongs to the GPI family.

It localises to the cytoplasm. The enzyme catalyses alpha-D-glucose 6-phosphate = beta-D-fructose 6-phosphate. The protein operates within carbohydrate biosynthesis; gluconeogenesis. It functions in the pathway carbohydrate degradation; glycolysis; D-glyceraldehyde 3-phosphate and glycerone phosphate from D-glucose: step 2/4. Catalyzes the reversible isomerization of glucose-6-phosphate to fructose-6-phosphate. This chain is Glucose-6-phosphate isomerase, found in Protochlamydia amoebophila (strain UWE25).